The primary structure comprises 427 residues: Diaminobutyrate--2-oxoglutarate transaminase (427 aa).

At lysine 269 the chain carries N6-(pyridoxal phosphate)lysine.

This sequence belongs to the class-III pyridoxal-phosphate-dependent aminotransferase family. Requires pyridoxal 5'-phosphate as cofactor.

It carries out the reaction L-2,4-diaminobutanoate + 2-oxoglutarate = L-aspartate 4-semialdehyde + L-glutamate. Its pathway is amine and polyamine biosynthesis; ectoine biosynthesis; L-ectoine from L-aspartate 4-semialdehyde: step 1/3. In terms of biological role, catalyzes reversively the conversion of L-aspartate beta-semialdehyde (ASA) to L-2,4-diaminobutyrate (DABA) by transamination with L-glutamate. The sequence is that of Diaminobutyrate--2-oxoglutarate transaminase (ectB) from Halalkalibacterium halodurans (strain ATCC BAA-125 / DSM 18197 / FERM 7344 / JCM 9153 / C-125) (Bacillus halodurans).